A 369-amino-acid polypeptide reads, in one-letter code: S-adenosylmethionine:tRNA ribosyltransferase-isomerase (369 aa).

The protein belongs to the QueA family. Monomer.

Its subcellular location is the cytoplasm. The catalysed reaction is 7-aminomethyl-7-carbaguanosine(34) in tRNA + S-adenosyl-L-methionine = epoxyqueuosine(34) in tRNA + adenine + L-methionine + 2 H(+). Its pathway is tRNA modification; tRNA-queuosine biosynthesis. In terms of biological role, transfers and isomerizes the ribose moiety from AdoMet to the 7-aminomethyl group of 7-deazaguanine (preQ1-tRNA) to give epoxyqueuosine (oQ-tRNA). The protein is S-adenosylmethionine:tRNA ribosyltransferase-isomerase of Synechococcus sp. (strain CC9311).